We begin with the raw amino-acid sequence, 337 residues long: Phenylalanine--tRNA ligase alpha subunit (337 aa).

A Mg(2+)-binding site is contributed by E258.

The protein belongs to the class-II aminoacyl-tRNA synthetase family. Phe-tRNA synthetase alpha subunit type 1 subfamily. In terms of assembly, tetramer of two alpha and two beta subunits. Mg(2+) serves as cofactor.

It is found in the cytoplasm. The catalysed reaction is tRNA(Phe) + L-phenylalanine + ATP = L-phenylalanyl-tRNA(Phe) + AMP + diphosphate + H(+). This Paraburkholderia phytofirmans (strain DSM 17436 / LMG 22146 / PsJN) (Burkholderia phytofirmans) protein is Phenylalanine--tRNA ligase alpha subunit.